The following is a 474-amino-acid chain: MLSVPDYEFWFVTGSQHLYGEEQLKSVAKDAQDIADKLNASGKLPYKVVFKDVMTTAESITNFMKEVNYNDKVAGVITWMHTFSPAKNWIRGTELLQKPLLHLATQYLNNIPYADIDFDYMNLNQSAHGDREYAYINARLQKHNKIVYGYWGDEDVQEQIARWEDVAVAYNESFKVKVARFGDTMRNVAVTEGDKVEAQIKMGWTVDYYGIGDLVEEINKVSDADVDKEYADLESRYEMVQGDNDADTYKHSVRVQLAQYLGIKRFLERGGYTAFTTNFEDLWGMEQLPGLASQLLIRDGYGFGAEGDWKTAALGRVMKIMSHNKQTAFMEDYTLDLRHGHEAILGSHMLEVDPSIASDKPRVEVHPLDIGGKDDPARLVFTGSEGEAIDVTVADFRDGFKMISYAVDANKPEAETPNLPVAKQLWTPKMGLKKGALEWMQAGGGHHTMLSFSLTEEQMEDYATMVGMTKAFLK.

The Mn(2+) site is built by glutamate 306, glutamate 331, histidine 348, and histidine 447.

Belongs to the arabinose isomerase family. The cofactor is Mn(2+).

It carries out the reaction beta-L-arabinopyranose = L-ribulose. It participates in carbohydrate degradation; L-arabinose degradation via L-ribulose; D-xylulose 5-phosphate from L-arabinose (bacterial route): step 1/3. Its function is as follows. Catalyzes the conversion of L-arabinose to L-ribulose. This is L-arabinose isomerase from Lactiplantibacillus plantarum (strain ATCC BAA-793 / NCIMB 8826 / WCFS1) (Lactobacillus plantarum).